A 24-amino-acid chain; its full sequence is Caerulein precursor fragment BM1 (24 aa).

Expressed by the skin glands.

It localises to the secreted. Antimicrobial peptide. The polypeptide is Caerulein precursor fragment BM1 (Xenopus boumbaensis (Mawa clawed frog)).